A 369-amino-acid polypeptide reads, in one-letter code: Cobalt-precorrin-5B C(1)-methyltransferase (369 aa).

The protein belongs to the CbiD family.

The catalysed reaction is Co-precorrin-5B + S-adenosyl-L-methionine = Co-precorrin-6A + S-adenosyl-L-homocysteine. The protein operates within cofactor biosynthesis; adenosylcobalamin biosynthesis; cob(II)yrinate a,c-diamide from sirohydrochlorin (anaerobic route): step 6/10. Its function is as follows. Catalyzes the methylation of C-1 in cobalt-precorrin-5B to form cobalt-precorrin-6A. The polypeptide is Cobalt-precorrin-5B C(1)-methyltransferase (Brucella melitensis biotype 1 (strain ATCC 23456 / CCUG 17765 / NCTC 10094 / 16M)).